The chain runs to 342 residues: Large ribosomal subunit protein uL3 (342 aa).

The segment at 1-22 is disordered; sequence MGHRKLSSPRRGSAGLRPRKRA.

This sequence belongs to the universal ribosomal protein uL3 family. In terms of assembly, part of the 50S ribosomal subunit. Forms a cluster with proteins L14 and L24e.

Functionally, one of the primary rRNA binding proteins, it binds directly near the 3'-end of the 23S rRNA, where it nucleates assembly of the 50S subunit. The chain is Large ribosomal subunit protein uL3 from Sulfolobus acidocaldarius (strain ATCC 33909 / DSM 639 / JCM 8929 / NBRC 15157 / NCIMB 11770).